A 205-amino-acid polypeptide reads, in one-letter code: Rho-related GTP-binding protein RhoQ (205 aa).

Residue 16–23 (GDGAVGKT) coordinates GTP. An Effector region motif is present at residues 38–46 (YVPTVFDHY). GTP-binding positions include 63-67 (DTAGQ) and 121-124 (TQID). Residue Cys202 is modified to Cysteine methyl ester. Cys202 is lipidated: S-farnesyl cysteine. A propeptide spans 203–205 (LIT) (removed in mature form).

It belongs to the small GTPase superfamily. Rho family. As to quaternary structure, interacts with EXO70, CDC42EP1, CDC42EP2 and CDC42EP3 in a GTP-dependent manner. Interacts with CDC42EP4, PARD6A, PARD6G (and probably PARD6B) in a GTP-dependent manner. Part of a quaternary complex containing PARD3, some PARD6 protein (PARD6A, PARD6B or PARD6G) and some atypical PKC protein (PRKCI or PRKCZ). Interacts with GOPC. Interacts with ARHGAP33/TCGAP. Post-translationally, may be post-translationally modified by both palmitoylation and polyisoprenylation.

The protein resides in the cytoplasm. The protein localises to the cell membrane. Regulated by guanine nucleotide exchange factors (GEFs) which promote the exchange of bound GDP for free GTP, GTPase activating proteins (GAPs) which increase the GTP hydrolysis activity, and GDP dissociation inhibitors which inhibit the dissociation of the nucleotide from the GTPase. Its function is as follows. Plasma membrane-associated small GTPase which cycles between an active GTP-bound and an inactive GDP-bound state. In active state binds to a variety of effector proteins to regulate cellular responses. Involved in epithelial cell polarization processes. May play a role in CFTR trafficking to the plasma membrane. Causes the formation of thin, actin-rich surface projections called filopodia. This chain is Rho-related GTP-binding protein RhoQ (Rhoq), found in Mus musculus (Mouse).